The sequence spans 259 residues: ATP synthase subunit a (259 aa).

A run of 6 helical transmembrane segments spans residues 37 to 57, 101 to 121, 131 to 151, 157 to 177, 203 to 223, and 232 to 252; these read LSIT…FLFM, YFPA…LGLI, LVVT…LAIV, FIGF…MVPI, VLAI…LMPA, and FELF…CVYI.

It belongs to the ATPase A chain family. In terms of assembly, F-type ATPases have 2 components, CF(1) - the catalytic core - and CF(0) - the membrane proton channel. CF(1) has five subunits: alpha(3), beta(3), gamma(1), delta(1), epsilon(1). CF(0) has three main subunits: a(1), b(2) and c(9-12). The alpha and beta chains form an alternating ring which encloses part of the gamma chain. CF(1) is attached to CF(0) by a central stalk formed by the gamma and epsilon chains, while a peripheral stalk is formed by the delta and b chains.

Its subcellular location is the cell inner membrane. Functionally, key component of the proton channel; it plays a direct role in the translocation of protons across the membrane. In Magnetococcus marinus (strain ATCC BAA-1437 / JCM 17883 / MC-1), this protein is ATP synthase subunit a.